The following is a 310-amino-acid chain: Glutarate 2-hydroxylase (310 aa).

3 residues coordinate Fe cation: H160, D162, and H277.

Belongs to the glutarate hydroxylase family. In terms of assembly, homotetramer. Fe(2+) is required as a cofactor.

The catalysed reaction is glutarate + 2-oxoglutarate + O2 = (S)-2-hydroxyglutarate + succinate + CO2. It functions in the pathway amino-acid degradation. Its function is as follows. Acts as an alpha-ketoglutarate-dependent dioxygenase catalyzing hydroxylation of glutarate (GA) to L-2-hydroxyglutarate (L2HG). Functions in a L-lysine degradation pathway that proceeds via cadaverine, glutarate and L-2-hydroxyglutarate. The polypeptide is Glutarate 2-hydroxylase (Shigella flexneri).